The primary structure comprises 232 residues: 5'-methylthioadenosine/S-adenosylhomocysteine nucleosidase (232 aa).

The active-site Proton acceptor is glutamate 12. Residues glycine 78, isoleucine 152, and 173–174 contribute to the substrate site; that span reads ME. Aspartate 197 (proton donor) is an active-site residue.

This sequence belongs to the PNP/UDP phosphorylase family. MtnN subfamily. As to quaternary structure, homodimer.

It carries out the reaction S-adenosyl-L-homocysteine + H2O = S-(5-deoxy-D-ribos-5-yl)-L-homocysteine + adenine. The enzyme catalyses S-methyl-5'-thioadenosine + H2O = 5-(methylsulfanyl)-D-ribose + adenine. It catalyses the reaction 5'-deoxyadenosine + H2O = 5-deoxy-D-ribose + adenine. The protein operates within amino-acid biosynthesis; L-methionine biosynthesis via salvage pathway; S-methyl-5-thio-alpha-D-ribose 1-phosphate from S-methyl-5'-thioadenosine (hydrolase route): step 1/2. Its function is as follows. Catalyzes the irreversible cleavage of the glycosidic bond in both 5'-methylthioadenosine (MTA) and S-adenosylhomocysteine (SAH/AdoHcy) to adenine and the corresponding thioribose, 5'-methylthioribose and S-ribosylhomocysteine, respectively. Also cleaves 5'-deoxyadenosine, a toxic by-product of radical S-adenosylmethionine (SAM) enzymes, into 5-deoxyribose and adenine. Thus, is required for in vivo function of the radical SAM enzymes biotin synthase and lipoic acid synthase, that are inhibited by 5'-deoxyadenosine accumulation. The protein is 5'-methylthioadenosine/S-adenosylhomocysteine nucleosidase of Escherichia coli O7:K1 (strain IAI39 / ExPEC).